Reading from the N-terminus, the 190-residue chain is Peptidyl-tRNA hydrolase (190 aa).

Position 14 (F14) interacts with tRNA. The Proton acceptor role is filled by H19. TRNA is bound by residues M64, N66, and N112.

Belongs to the PTH family. In terms of assembly, monomer.

The protein resides in the cytoplasm. It carries out the reaction an N-acyl-L-alpha-aminoacyl-tRNA + H2O = an N-acyl-L-amino acid + a tRNA + H(+). In terms of biological role, hydrolyzes ribosome-free peptidyl-tRNAs (with 1 or more amino acids incorporated), which drop off the ribosome during protein synthesis, or as a result of ribosome stalling. Functionally, catalyzes the release of premature peptidyl moieties from peptidyl-tRNA molecules trapped in stalled 50S ribosomal subunits, and thus maintains levels of free tRNAs and 50S ribosomes. This Staphylococcus aureus (strain Mu3 / ATCC 700698) protein is Peptidyl-tRNA hydrolase.